The following is a 242-amino-acid chain: ATP synthase subunit a (242 aa).

The next 6 helical transmembrane spans lie at 29–49, 84–104, 114–134, 140–160, 189–209, and 210–230; these read SSIYMLLASILALTYFYLAFY, FIPLVFSLFIFILFCNLLGMT, IIVTFTLAILVFLTVTIVGFV, FLTLFLPHGTPLWLAPLMIVI, VIAGFTVSLMIYLKFLPIPLM, and VILIGFEIFVAILQAYIFTIL.

Belongs to the ATPase A chain family. F-type ATPases have 2 components, CF(1) - the catalytic core - and CF(0) - the membrane proton channel. CF(1) has five subunits: alpha(3), beta(3), gamma(1), delta(1), epsilon(1). CF(0) has three main subunits: a(1), b(2) and c(9-12). The alpha and beta chains form an alternating ring which encloses part of the gamma chain. CF(1) is attached to CF(0) by a central stalk formed by the gamma and epsilon chains, while a peripheral stalk is formed by the delta and b chains.

It is found in the cell inner membrane. Functionally, key component of the proton channel; it plays a direct role in the translocation of protons across the membrane. In Rickettsia felis (strain ATCC VR-1525 / URRWXCal2) (Rickettsia azadi), this protein is ATP synthase subunit a.